A 244-amino-acid polypeptide reads, in one-letter code: Coenzyme Q-binding protein COQ10 homolog B, mitochondrial (244 aa).

It belongs to the COQ10 family. As to quaternary structure, interacts with coenzyme Q.

It is found in the mitochondrion inner membrane. Required for the function of coenzyme Q in the respiratory chain. May serve as a chaperone or may be involved in the transport of Q6 from its site of synthesis to the catalytic sites of the respiratory complexes. The protein is Coenzyme Q-binding protein COQ10 homolog B, mitochondrial (coq10b) of Xenopus laevis (African clawed frog).